The following is a 141-amino-acid chain: Hemoglobin subunit alpha (141 aa).

The Globin domain maps to 1–141 (VLSSKDKANI…VSTVLTSKYR (141 aa)). S3 carries the phosphoserine modification. Residues K7 and K11 each carry the N6-succinyllysine modification. An N6-acetyllysine; alternate modification is found at K16. At K16 the chain carries N6-succinyllysine; alternate. Y24 carries the phosphotyrosine modification. An N6-succinyllysine modification is found at K40. The residue at position 49 (S49) is a Phosphoserine. H58 provides a ligand contact to O2. H87 lines the heme b pocket. A Phosphoserine modification is found at S102. A Phosphothreonine modification is found at T108. S124 is subject to Phosphoserine. Phosphothreonine occurs at positions 134 and 137. Phosphoserine is present on S138.

This sequence belongs to the globin family. In terms of assembly, heterotetramer of two alpha chains and two beta chains. In terms of tissue distribution, red blood cells.

In terms of biological role, involved in oxygen transport from the lung to the various peripheral tissues. Hemopressin acts as an antagonist peptide of the cannabinoid receptor CNR1. Hemopressin-binding efficiently blocks cannabinoid receptor CNR1 and subsequent signaling. The protein is Hemoglobin subunit alpha (HBA) of Lama glama (Llama).